We begin with the raw amino-acid sequence, 297 residues long: Myozenin-1 (297 aa).

The disordered stretch occupies residues 1 to 34 (MPLSGTPAPNKKRKSSKLIMELTGGGQESSGLNL). Ser-82 bears the Phosphoserine mark. Residues 105–172 (FSYSKSSGGG…ALPDNQAGGE (68 aa)) form a disordered region. Low complexity predominate over residues 118 to 128 (RSGSAGQYGSD). A compositionally biased stretch (gly residues) spans 136–162 (SGSGSGSGSGPGSGGAGGPGGHSGRGG).

Belongs to the myozenin family. In terms of assembly, interacts with ACTN2, ACTN3, FLNA, FLNB, FLNC, LDB3, PPP3CA and TCAP. Interacts via its C-terminal region with MYOT.

The protein localises to the nucleus. The protein resides in the cell projection. Its subcellular location is the pseudopodium. Functionally, myozenins may serve as intracellular binding proteins involved in linking Z-disk proteins such as alpha-actinin, gamma-filamin, TCAP/telethonin, LDB3/ZASP and localizing calcineurin signaling to the sarcomere. Plays an important role in the modulation of calcineurin signaling. May play a role in myofibrillogenesis. This Bos taurus (Bovine) protein is Myozenin-1 (MYOZ1).